The sequence spans 1035 residues: Unconventional myosin IC (1035 aa).

Positions 21-703 (GVQDFVLLEN…TLFDTEDAYQ (683 aa)) constitute a Myosin motor domain. Residue 114–121 (GESGSGKT) participates in ATP binding. S304 carries the phosphoserine modification. T310 bears the Phosphothreonine mark. The actin-binding stretch occupies residues 578–600 (LNNLMDILMCKEPSYIRCIKPND). 3 IQ domains span residues 696 to 728 (FDTEDAYQEKKHEIAAIIQAHWKGLMQRRKYLK), 729 to 751 (LRAQVIIMQSYCRRKLAQQAAKK), and 752 to 779 (RREAADKIRAFIKGFITRNDAPNGFNEE). The TH1 domain maps to 857–1035 (KNNYASSVST…KGHLVIIGTQ (179 aa)).

Belongs to the TRAFAC class myosin-kinesin ATPase superfamily. Myosin family. Binds F-actin. As to expression, in the embryo, expressed in gastric caeca, midgut cells of the proventriculus, and in the mid and hindgut. In the larval and adult gut brush border, expressed in the microvilli. Also expressed at high levels in follicle cells during oogenesis.

The protein localises to the cytoplasm. Its subcellular location is the cell cortex. It is found in the cell membrane. Unconventional myosin that functions as actin-based motor protein with ATPase activity. Binds to membranes enriched in phosphatidylinositol 4-5-bisphosphate, and can glide along actin filaments when anchored to a lipid bilayer. Functions as antagonist for Myo31DF, an unconventional myosin with an essential role in the establishment of body left-right asymmetry. This chain is Unconventional myosin IC (Myo61F), found in Drosophila melanogaster (Fruit fly).